Reading from the N-terminus, the 176-residue chain is Small ribosomal subunit protein uS5 (176 aa).

The S5 DRBM domain occupies 11 to 74 (LSEVLVDVNR…QAAKKRMMKV (64 aa)).

This sequence belongs to the universal ribosomal protein uS5 family. Part of the 30S ribosomal subunit. Contacts proteins S4 and S8.

In terms of biological role, with S4 and S12 plays an important role in translational accuracy. Functionally, located at the back of the 30S subunit body where it stabilizes the conformation of the head with respect to the body. This is Small ribosomal subunit protein uS5 from Rickettsia rickettsii (strain Iowa).